We begin with the raw amino-acid sequence, 238 residues long: Ribonuclease PH (238 aa).

Phosphate-binding positions include arginine 86 and 124–126 (GTR).

This sequence belongs to the RNase PH family. In terms of assembly, homohexameric ring arranged as a trimer of dimers.

It carries out the reaction tRNA(n+1) + phosphate = tRNA(n) + a ribonucleoside 5'-diphosphate. Its function is as follows. Phosphorolytic 3'-5' exoribonuclease that plays an important role in tRNA 3'-end maturation. Removes nucleotide residues following the 3'-CCA terminus of tRNAs; can also add nucleotides to the ends of RNA molecules by using nucleoside diphosphates as substrates, but this may not be physiologically important. Probably plays a role in initiation of 16S rRNA degradation (leading to ribosome degradation) during starvation. The chain is Ribonuclease PH from Haemophilus influenzae (strain PittEE).